The primary structure comprises 465 residues: Cysteine--tRNA ligase (465 aa).

Cysteine 29 contacts Zn(2+). The short motif at 31–41 (PTVYNYIHIGN) is the 'HIGH' region element. Zn(2+)-binding residues include cysteine 209, histidine 234, and glutamate 238. A 'KMSKS' region motif is present at residues 266 to 270 (KMSKS). Lysine 269 lines the ATP pocket. A Phosphoserine modification is found at serine 270.

The protein belongs to the class-I aminoacyl-tRNA synthetase family. Monomer. Zn(2+) serves as cofactor.

The protein resides in the cytoplasm. The enzyme catalyses tRNA(Cys) + L-cysteine + ATP = L-cysteinyl-tRNA(Cys) + AMP + diphosphate. The protein is Cysteine--tRNA ligase of Bacillus cereus (strain AH187).